A 707-amino-acid polypeptide reads, in one-letter code: Complement C1r-A subcomponent (707 aa).

Positions 1-16 (MWLFALLVTLFYGVEG) are cleaved as a signal peptide. In terms of domain architecture, CUB 1 spans 17-140 (SIYLPQKLYG…KGFLAYYQAV (124 aa)). Positions 65, 73, and 118 each coordinate Ca(2+). C70 and C88 are disulfide-bonded. N-linked (GlcNAc...) asparagine glycosylation occurs at N124. Ca(2+) contacts are provided by D141, L142, and E144. The EGF-like; calcium-binding domain maps to 141 to 189 (DLDECASQPNSVEEGLQPRCQHLCHNYVGGYFCSCHPGYELQKDGQSCQ). Intrachain disulfides connect C145–C164, C160–C173, C175–C188, and C192–C219. N166, Y167, and G170 together coordinate Ca(2+). The residue at position 166 (N166) is a (3R)-3-hydroxyasparagine. Residues 192–304 (CSSELYTEPS…RGWKLHYTTE (113 aa)) form the CUB 2 domain. Position 205 is a phosphoserine; by CK2 (S205). N220 is a glycosylation site (N-linked (GlcNAc...) asparagine). D242, D252, D289, and D293 together coordinate Ca(2+). Residues C249 and C267 are joined by a disulfide bond. Sushi domains are found at residues 306–372 (IKCP…RCKI) and 373–448 (KNCG…RCLP). 5 cysteine pairs are disulfide-bonded: C308/C357, C337/C370, C375/C428, C405/C446, and C450/C579. The Peptidase S1 domain occupies 463–704 (IIRGQPARPG…YVDWIKKEMG (242 aa)). Residues H501 and D559 each act as charge relay system in the active site. The N-linked (GlcNAc...) asparagine glycan is linked to N583. Disulfide bonds link C622/C641 and C652/C682. S656 (charge relay system) is an active-site residue.

Belongs to the peptidase S1 family. In terms of assembly, core component of the complement C1 complex, a calcium-dependent complex composed of 1 molecule of the C1Q subcomplex, 2 molecules of C1R and 2 molecules of C1S. The C1Q subcomplex is composed 18 subunits: 3 chains of C1QA, C1QB, and C1QC trimerize to form 6 collagen-like triple helices connected to six globular ligand-recognition modules. Within the C1 complex, C1R is a dimer of identical chains, each of which is activated by cleavage into two chains, heavy and light, connected by disulfide bonds. Post-translationally, cleaved and activated by autocatalytic processing to generate Complement C1r subcomponent heavy and light chains that are connected by disulfide bonds. In terms of processing, the iron and 2-oxoglutarate dependent 3-hydroxylation of aspartate and asparagine is (R) stereospecific within EGF domains.

Its subcellular location is the secreted. It localises to the cell surface. It carries out the reaction Selective cleavage of Lys(or Arg)-|-Ile bond in complement subcomponent C1s to form the active form of C1s (EC 3.4.21.42).. Activated by the C1Q subcomplex of the C1 complex following C1Q binding to immunoglobulins (IgG or IgM) complexed with antigens to form antigen-antibody complexes on the surface of pathogens. Immunoglobulin-binding promotes autoactivation of C1R, which results in the cleavage of the Arg-Ile bond in the catalytic domain. Functionally, serine protease component of the complement C1 complex, a multiprotein complex that initiates the classical pathway of the complement system, a cascade of proteins that leads to phagocytosis and breakdown of pathogens and signaling that strengthens the adaptive immune system. C1R catalyzes the first enzymatic step in the classical complement pathway: it is activated by the C1Q subcomplex of the C1 complex, which associates with IgG or IgM immunoglobulins complexed with antigens to form antigen-antibody complexes on the surface of pathogens. Immunoglobulin-binding promotes the autocatalytic cleavage and activation of C1R. Activated C1R then cleaves and activates C1S, the second protease of the classical complement pathway. It is unclear if C1R activates C1S within single, strained C1 complexes or between neighboring C1 complexes on surfaces. The chain is Complement C1r-A subcomponent (C1ra) from Mus musculus (Mouse).